Consider the following 238-residue polypeptide: CD63 antigen (238 aa).

The Cytoplasmic segment spans residues 1–11 (MAVEGGMKCVK). A helical transmembrane segment spans residues 12–32 (FLLYVLLLAFCACAVGLIAIG). The Extracellular segment spans residues 33–51 (VAVQVVLKQAITHETTAGS). A helical membrane pass occupies residues 52-72 (LLPVVIIAVGAFLFLVAFVGC). Topologically, residues 73-81 (CGACKENYC) are cytoplasmic. A helical transmembrane segment spans residues 82-102 (LMITFAIFLSLIMLVEVAVAI). Residues 103–203 (AGYVFRDQVK…TIAIWLRKNI (101 aa)) lie on the Extracellular side of the membrane. N-linked (GlcNAc...) asparagine glycosylation is found at asparagine 116, asparagine 130, asparagine 150, and asparagine 172. Residues 204–224 (LLVAAAALGIAFVEVLGIIFS) form a helical membrane-spanning segment. The Cytoplasmic portion of the chain corresponds to 225 to 238 (CCLVKSIRSGYEVM). The short motif at 234–238 (GYEVM) is the Lysosomal targeting motif element.

Belongs to the tetraspanin (TM4SF) family. In terms of assembly, interacts with TIMP1 and ITGB1 and recruits TIMP1 to ITGB1. Interacts with CD9. Identified in a complex with CD9 and ITGB3. Interacts with PMEL. Interacts with KDR/VEGFR2; identified in a complex with ITGB1 and KDR/VEGFR2 and is required to recruit KDR to ITGB1 complexes. Interacts with SYT7. Post-translationally, palmitoylated at a low, basal level in unstimulated platelets. The level of palmitoylation increases when platelets are activated by thrombin (in vitro). Ubiquitous. Strongly expressed in kidney. Detected in spleen, bone marrow, peripheral blood mononuclear cells and macrophages.

The protein localises to the cell membrane. It localises to the lysosome membrane. It is found in the late endosome membrane. Its subcellular location is the endosome. The protein resides in the multivesicular body. The protein localises to the melanosome. It localises to the secreted. It is found in the extracellular exosome. Its subcellular location is the cell surface. In terms of biological role, functions as a cell surface receptor for TIMP1 and plays a role in the activation of cellular signaling cascades. Plays a role in the activation of ITGB1 and integrin signaling, leading to the activation of AKT, FAK/PTK2 and MAP kinases. Promotes cell survival, reorganization of the actin cytoskeleton, cell adhesion, spreading and migration, via its role in the activation of AKT and FAK/PTK2. Plays a role in VEGFA signaling via its role in regulating the internalization of KDR/VEGFR2. Plays a role in intracellular vesicular transport processes, and is required for normal trafficking of the PMEL luminal domain that is essential for the development and maturation of melanocytes. Plays a role in the adhesion of leukocytes onto endothelial cells via its role in the regulation of SELP trafficking. May play a role in mast cell degranulation in response to Ms4a2/FceRI stimulation, but not in mast cell degranulation in response to other stimuli. The protein is CD63 antigen (Cd63) of Mus musculus (Mouse).